We begin with the raw amino-acid sequence, 488 residues long: Pup--protein ligase (488 aa).

E34 is a binding site for Mg(2+). R77 lines the ATP pocket. Y79 provides a ligand contact to Mg(2+). D81 (proton acceptor) is an active-site residue. E87 provides a ligand contact to Mg(2+). ATP-binding residues include T90 and W453.

The protein belongs to the Pup ligase/Pup deamidase family. Pup-conjugating enzyme subfamily.

It catalyses the reaction ATP + [prokaryotic ubiquitin-like protein]-L-glutamate + [protein]-L-lysine = ADP + phosphate + N(6)-([prokaryotic ubiquitin-like protein]-gamma-L-glutamyl)-[protein]-L-lysine.. Its pathway is protein degradation; proteasomal Pup-dependent pathway. It functions in the pathway protein modification; protein pupylation. In terms of biological role, catalyzes the covalent attachment of the prokaryotic ubiquitin-like protein modifier Pup to the proteasomal substrate proteins, thereby targeting them for proteasomal degradation. This tagging system is termed pupylation. The ligation reaction involves the side-chain carboxylate of the C-terminal glutamate of Pup and the side-chain amino group of a substrate lysine. The chain is Pup--protein ligase from Bifidobacterium dentium (strain ATCC 27534 / DSM 20436 / JCM 1195 / Bd1).